We begin with the raw amino-acid sequence, 272 residues long: HMP-PP phosphatase (272 aa).

The active-site Nucleophile is the Asp8. Mg(2+) contacts are provided by Asp8, Asp10, and Asp212.

This sequence belongs to the HAD-like hydrolase superfamily. Cof family. Mg(2+) is required as a cofactor.

The enzyme catalyses 4-amino-2-methyl-5-(diphosphooxymethyl)pyrimidine + H2O = 4-amino-2-methyl-5-(phosphooxymethyl)pyrimidine + phosphate + H(+). In terms of biological role, catalyzes the hydrolysis of 4-amino-2-methyl-5-hydroxymethylpyrimidine pyrophosphate (HMP-PP) to 4-amino-2-methyl-5-hydroxymethylpyrimidine phosphate (HMP-P). In Escherichia coli (strain UTI89 / UPEC), this protein is HMP-PP phosphatase.